The sequence spans 299 residues: Probable 4-deoxy-4-formamido-L-arabinose-phosphoundecaprenol deformylase ArnD (299 aa).

Positions 2–263 (IDVGLRIDVD…EASARGIRFV (262 aa)) constitute a NodB homology domain.

The protein belongs to the polysaccharide deacetylase family. ArnD deformylase subfamily.

It catalyses the reaction 4-deoxy-4-formamido-alpha-L-arabinopyranosyl di-trans,octa-cis-undecaprenyl phosphate + H2O = 4-amino-4-deoxy-alpha-L-arabinopyranosyl di-trans,octa-cis-undecaprenyl phosphate + formate. It functions in the pathway glycolipid biosynthesis; 4-amino-4-deoxy-alpha-L-arabinose undecaprenyl phosphate biosynthesis; 4-amino-4-deoxy-alpha-L-arabinose undecaprenyl phosphate from UDP-4-deoxy-4-formamido-beta-L-arabinose and undecaprenyl phosphate: step 2/2. Its pathway is bacterial outer membrane biogenesis; lipopolysaccharide biosynthesis. Functionally, catalyzes the deformylation of 4-deoxy-4-formamido-L-arabinose-phosphoundecaprenol to 4-amino-4-deoxy-L-arabinose-phosphoundecaprenol. The modified arabinose is attached to lipid A and is required for resistance to polymyxin and cationic antimicrobial peptides. The protein is Probable 4-deoxy-4-formamido-L-arabinose-phosphoundecaprenol deformylase ArnD of Aeromonas salmonicida (strain A449).